The chain runs to 145 residues: I-leader protein (145 aa).

Belongs to the adenoviridae leader protein family.

It is found in the host cytoplasm. Its subcellular location is the host perinuclear region. This is I-leader protein from Human adenovirus C serotype 5 (HAdV-5).